The sequence spans 577 residues: Sulfite reductase [NADPH] hemoprotein beta-component (577 aa).

Residues C436, C442, C481, and C485 each contribute to the [4Fe-4S] cluster site. C485 contacts siroheme.

It belongs to the nitrite and sulfite reductase 4Fe-4S domain family. In terms of assembly, alpha(8)-beta(8). The alpha component is a flavoprotein, the beta component is a hemoprotein. Requires siroheme as cofactor. [4Fe-4S] cluster is required as a cofactor.

It catalyses the reaction hydrogen sulfide + 3 NADP(+) + 3 H2O = sulfite + 3 NADPH + 4 H(+). It functions in the pathway sulfur metabolism; hydrogen sulfide biosynthesis; hydrogen sulfide from sulfite (NADPH route): step 1/1. Functionally, component of the sulfite reductase complex that catalyzes the 6-electron reduction of sulfite to sulfide. This is one of several activities required for the biosynthesis of L-cysteine from sulfate. The chain is Sulfite reductase [NADPH] hemoprotein beta-component from Shewanella woodyi (strain ATCC 51908 / MS32).